We begin with the raw amino-acid sequence, 208 residues long: Histone H1t (208 aa).

A compositionally biased stretch (polar residues) spans methionine 1–leucine 12. Residues methionine 1–glycine 39 are disordered. Serine 9 carries the post-translational modification Phosphoserine. Positions arginine 38 to lysine 111 constitute an H15 domain. Arginine 56 is modified (citrulline). Positions glycine 93–lysine 208 are disordered. Basic residues predominate over residues lysine 121–glycine 134. The residue at position 141 (serine 141) is a Phosphoserine. Residues lysine 143 to lysine 154 are compositionally biased toward basic residues. Phosphothreonine is present on threonine 156. Serine 163, serine 178, and serine 187 each carry phosphoserine. Residues threonine 199 to lysine 208 show a composition bias toward basic and acidic residues.

The protein belongs to the histone H1/H5 family. Post-translationally, phosphorylated in early spermatids. In terms of processing, citrullination at Arg-56 (H1R54ci) by PADI4 takes place within the DNA-binding site of H1 and results in its displacement from chromatin and global chromatin decondensation, thereby promoting pluripotency and stem cell maintenance. As to expression, testis-specific. Expressed in pachytene spermatocytes during meiotic prophase I.

Its subcellular location is the nucleus. It is found in the chromosome. Functionally, testis-specific histone H1 that forms less compacted chromatin compared to other H1 histone subtypes. Formation of more relaxed chromatin may be required to promote chromatin architecture required for proper chromosome regulation during meiosis, such as homologous recombination. Histones H1 act as linkers that bind to nucleosomes and compact polynucleosomes into a higher-order chromatin configuration. In Rattus norvegicus (Rat), this protein is Histone H1t.